Reading from the N-terminus, the 560-residue chain is Putative transport protein VP1232 (560 aa).

5 helical membrane-spanning segments follow: residues 8-28 (LLDQ…LAIG), 37-57 (LGNS…GFSF), 66-86 (FMLF…GIFF), 91-111 (HYFI…YGLS), and 164-184 (VGYA…AKLL). RCK C-terminal domains follow at residues 205–292 (LGNS…FRNG) and 293–376 (KEVF…KIGF). A run of 6 helical transmembrane segments spans residues 386–406 (LLAF…TMTF), 409–429 (VSFS…LGFL), 443–463 (ALNM…GLSA), 478–498 (VIGL…LVGA), 506–526 (ALLF…DVVN), and 539–559 (AGTY…LIIL).

The protein belongs to the AAE transporter (TC 2.A.81) family. YbjL subfamily.

Its subcellular location is the cell membrane. This is Putative transport protein VP1232 from Vibrio parahaemolyticus serotype O3:K6 (strain RIMD 2210633).